The following is a 480-amino-acid chain: MNLTKVWNTTLGSLQVQLPRHEYNTWVRGANLLDIDNGVAIIRAPNAFIKEGLESRYLTTLREQLGSVVGFPVDVRIVLATSESERIDGASINGRHAARDTRKSDHHAPLSGGYGNGISHPLERASVHQLELHRAVRSSMLNPRYTFDRFIIGPSNRLANAACMAVAEHPAQAYNPLFLYGGVGLGKTHLLHAIGNFVLDRDPEVNVLYVSSETFTNDLINSIRRQQTEEFRIRYRNIDILLIDDIQFIAGKEQTQEEFFHTFNTLHSAGKQIIISSDRSPKAILTLEERLRSRFEWGLIVDVQMPDLETRTAILRAKAEQSPVPVPQPVIDFLAQRIQSHIRELEGCLNRVTAYAQMYNIPVTIEVATAALSELLDTNRRKRVTPEAILREVAAFYSVDLRSLQGRGRSRNIVTPRHVAMYLLREETDSSLMEIGQLLGGRDHTTVMYGCDKIAEEINTDARLRQEVAAIRERLMNSAV.

Positions 1–71 (MNLTKVWNTT…REQLGSVVGF (71 aa)) are domain I, interacts with DnaA modulators. Positions 71 to 139 (FPVDVRIVLA…LELHRAVRSS (69 aa)) are domain II. The disordered stretch occupies residues 91 to 115 (SINGRHAARDTRKSDHHAPLSGGYG). A compositionally biased stretch (basic and acidic residues) spans 97 to 108 (AARDTRKSDHHA). A domain III, AAA+ region region spans residues 140-356 (MLNPRYTFDR…GCLNRVTAYA (217 aa)). ATP contacts are provided by Gly-184, Gly-186, Lys-187, and Thr-188. The interval 357 to 480 (QMYNIPVTIE…IRERLMNSAV (124 aa)) is domain IV, binds dsDNA.

This sequence belongs to the DnaA family. In terms of assembly, oligomerizes as a right-handed, spiral filament on DNA at oriC.

It localises to the cytoplasm. Functionally, plays an essential role in the initiation and regulation of chromosomal replication. ATP-DnaA binds to the origin of replication (oriC) to initiate formation of the DNA replication initiation complex once per cell cycle. Binds the DnaA box (a 9 base pair repeat at the origin) and separates the double-stranded (ds)DNA. Forms a right-handed helical filament on oriC DNA; dsDNA binds to the exterior of the filament while single-stranded (ss)DNA is stabiized in the filament's interior. The ATP-DnaA-oriC complex binds and stabilizes one strand of the AT-rich DNA unwinding element (DUE), permitting loading of DNA polymerase. After initiation quickly degrades to an ADP-DnaA complex that is not apt for DNA replication. Binds acidic phospholipids. The protein is Chromosomal replication initiator protein DnaA of Roseiflexus castenholzii (strain DSM 13941 / HLO8).